A 291-amino-acid polypeptide reads, in one-letter code: MIRRRLIIAAAAATALAACASGISNAPAPAPQPATTGSHAPGKTEVLWLGQAATRITTPGGKVIVIDPWLTGNPKTPPAFKQLSALGKVDMILLTHAHGDHLGDAPAIATTQHVPIWNGGGMGPQLVSLGLVTSDLVQPFGKSGTVMPFGPNGPKITAVHAEHSSELVWKNPATNKNESHYGGEPVGYIIEMENGFKIWHMGDTGLFSDMKLIAERYKPDLAMIPIGGHYTMGPQDAAIAVRDFIKPRYAIPMHYGTSPMLRGTPDEFKAALGAGATTAVIVPDPGQQVAF.

Belongs to the UPF0173 family.

This Cupriavidus metallidurans (strain ATCC 43123 / DSM 2839 / NBRC 102507 / CH34) (Ralstonia metallidurans) protein is UPF0173 metal-dependent hydrolase Rmet_5695.